The chain runs to 297 residues: Formamidopyrimidine-DNA glycosylase (297 aa).

Pro-2 serves as the catalytic Schiff-base intermediate with DNA. The active-site Proton donor is the Glu-3. The active-site Proton donor; for beta-elimination activity is Lys-61. Arg-120 and Arg-176 together coordinate DNA. The FPG-type zinc-finger motif lies at 262 to 296 (HVYGRQGQPCDRCGTAIVRESFMNRGSHFCPRCQR). Catalysis depends on Arg-286, which acts as the Proton donor; for delta-elimination activity.

It belongs to the FPG family. As to quaternary structure, monomer. Zn(2+) serves as cofactor.

It carries out the reaction Hydrolysis of DNA containing ring-opened 7-methylguanine residues, releasing 2,6-diamino-4-hydroxy-5-(N-methyl)formamidopyrimidine.. The catalysed reaction is 2'-deoxyribonucleotide-(2'-deoxyribose 5'-phosphate)-2'-deoxyribonucleotide-DNA = a 3'-end 2'-deoxyribonucleotide-(2,3-dehydro-2,3-deoxyribose 5'-phosphate)-DNA + a 5'-end 5'-phospho-2'-deoxyribonucleoside-DNA + H(+). Functionally, involved in base excision repair of DNA damaged by oxidation or by mutagenic agents. Acts as a DNA glycosylase that recognizes and removes damaged bases. Has a preference for oxidized purines, such as 7,8-dihydro-8-oxoguanine (8-oxoG). Has AP (apurinic/apyrimidinic) lyase activity and introduces nicks in the DNA strand. Cleaves the DNA backbone by beta-delta elimination to generate a single-strand break at the site of the removed base with both 3'- and 5'-phosphates. The protein is Formamidopyrimidine-DNA glycosylase of Leifsonia xyli subsp. xyli (strain CTCB07).